A 332-amino-acid chain; its full sequence is 2,3-diketo-L-gulonate reductase (332 aa).

The active-site Proton donor is the histidine 44. NAD(+) contacts are provided by residues 168-174 (ITMVDMS), 224-225 (WK), and 304-306 (GHE).

It belongs to the LDH2/MDH2 oxidoreductase family. DlgD subfamily. As to quaternary structure, homodimer.

Its subcellular location is the cytoplasm. It catalyses the reaction 3-dehydro-L-gulonate + NAD(+) = 2,3-dioxo-L-gulonate + NADH + H(+). It carries out the reaction 3-dehydro-L-gulonate + NADP(+) = 2,3-dioxo-L-gulonate + NADPH + H(+). Functionally, catalyzes the reduction of 2,3-diketo-L-gulonate in the presence of NADH, to form 3-keto-L-gulonate. This is 2,3-diketo-L-gulonate reductase from Escherichia coli O139:H28 (strain E24377A / ETEC).